The chain runs to 433 residues: Keratin, type I cytoskeletal 17 (433 aa).

Residues 1-24 form a disordered region; that stretch reads MTTTIRQFTSSSSIKGSSGLGGGS. A head region spans residues 1 to 83; sequence MTTTIRQFTS…GGVDGLLAGG (83 aa). A phosphoserine mark is found at S12 and S13. K15 participates in a covalent cross-link: Glycyl lysine isopeptide (Lys-Gly) (interchain with G-Cter in SUMO1); alternate. A Glycyl lysine isopeptide (Lys-Gly) (interchain with G-Cter in SUMO2); alternate cross-link involves residue K15. Phosphoserine is present on residues S25, S32, S34, and S39. S44 is subject to Phosphoserine; by RPS6KA1. A coil 1A region spans residues 84–120; the sequence is EKATMQNLNDRLASYLDKVRALEEANTELEVKIRDWY. In terms of domain architecture, IF rod spans 84 to 395; the sequence is EKATMQNLND…RLLEGEDAHL (312 aa). A Phosphothreonine modification is found at T110. The segment at 121 to 138 is linker 1; it reads QKQAPGPARDYSAYYQTI. The tract at residues 139-230 is coil 1B; it reads EDLKNKILVA…NHEEEMNALR (92 aa). The tract at residues 231-250 is linker 12; the sequence is GQVGGEINVEMDAAPGVDLS. The segment at 251–392 is coil 2; the sequence is RILSEMRDQY…TYRRLLEGED (142 aa). Residue K278 forms a Glycyl lysine isopeptide (Lys-Gly) (interchain with G-Cter in SUMO2) linkage. T279 bears the Phosphothreonine mark. S323 is modified (phosphoserine). The tail stretch occupies residues 393–433; that stretch reads AHLTQYKPKEPVTTRQVRTIVEEVQDGKVISSREQVHQTTR. Residues K399, K401, and K420 each participate in a glycyl lysine isopeptide (Lys-Gly) (interchain with G-Cter in SUMO1); alternate cross-link. Glycyl lysine isopeptide (Lys-Gly) (interchain with G-Cter in SUMO2); alternate cross-links involve residues K399, K401, and K420.

The protein belongs to the intermediate filament family. In terms of assembly, heterodimer of a type I and a type II keratin. KRT17 associates with KRT6 isomers (KRT6A or KRT6B). Interacts with TRADD and SFN. In terms of processing, phosphorylation at Ser-44 occurs in a growth- and stress-dependent fashion in skin keratinocytes, it has no effect on filament organization.

The protein localises to the cytoplasm. In terms of biological role, type I keratin involved in the formation and maintenance of various skin appendages, specifically in determining shape and orientation of hair. Required for the correct growth of hair follicles, in particular for the persistence of the anagen (growth) state. Modulates the function of TNF-alpha in the specific context of hair cycling. Regulates protein synthesis and epithelial cell growth through binding to the adapter protein SFN and by stimulating Akt/mTOR pathway. Involved in tissue repair. May be a marker of basal cell differentiation in complex epithelia and therefore indicative of a certain type of epithelial 'stem cells'. Acts as a promoter of epithelial proliferation by acting a regulator of immune response in skin: promotes Th1/Th17-dominated immune environment contributing to the development of basaloid skin tumors. May act as an autoantigen in the immunopathogenesis of psoriasis, with certain peptide regions being a major target for autoreactive T-cells and hence causing their proliferation. The polypeptide is Keratin, type I cytoskeletal 17 (Rattus norvegicus (Rat)).